The sequence spans 89 residues: Small ribosomal subunit protein uS15 (89 aa).

This sequence belongs to the universal ribosomal protein uS15 family. As to quaternary structure, part of the 30S ribosomal subunit. Forms a bridge to the 50S subunit in the 70S ribosome, contacting the 23S rRNA.

Its function is as follows. One of the primary rRNA binding proteins, it binds directly to 16S rRNA where it helps nucleate assembly of the platform of the 30S subunit by binding and bridging several RNA helices of the 16S rRNA. Functionally, forms an intersubunit bridge (bridge B4) with the 23S rRNA of the 50S subunit in the ribosome. This chain is Small ribosomal subunit protein uS15, found in Roseiflexus sp. (strain RS-1).